Reading from the N-terminus, the 497-residue chain is Reticulophagy regulator 1 (497 aa).

A disordered region spans residues 1 to 51 (MASPAPPEHAEEGCPAPAAEEQAPPSPPPPQASPAERQQQEEEAQEAGAAE). Over 1–59 (MASPAPPEHAEEGCPAPAAEEQAPPSPPPPQASPAERQQQEEEAQEAGAAEGAGLQVEE) the chain is Cytoplasmic. The segment covering 13–23 (GCPAPAAEEQA) has biased composition (low complexity). A helical membrane pass occupies residues 60 to 80 (AAGRAAAAVTWLLGEPVLWLG). The Lumenal segment spans residues 81-95 (CRADELLSWKRPLRS). Residues 84 to 233 (DELLSWKRPL…LLCAFLCPLF (150 aa)) are reticulon homology domain. A helical membrane pass occupies residues 96–116 (LLGFVAANLLFWFLALTPWRV). The Cytoplasmic portion of the chain corresponds to 117-118 (YH). The chain crosses the membrane as a helical span at residues 119 to 139 (LISVMILGRVIMQIIKDMVLS). Residues 140-208 (RTRGAQLWRS…LVCSVCTFFT (69 aa)) are Lumenal-facing. At serine 149 the chain carries Phosphoserine. At serine 151 the chain carries Phosphoserine; by CAMK2B. A Phosphoserine modification is found at serine 153. The helical transmembrane segment at 209 to 229 (ILGSYIPGVILSYLLLLCAFL) threads the bilayer. Residues 230-497 (CPLFKCNDIG…GFLSNLLGGH (268 aa)) lie on the Cytoplasmic side of the membrane. Residues 319–330 (FNLSEGYTPQTD) are compositionally biased toward polar residues. Disordered regions lie at residues 319 to 365 (FNLS…EDEL), 377 to 396 (KEQLDSGHRPSKETQSAAGL), 436 to 455 (LSQAAPIPEEDTDTEEGDDF), and 468 to 497 (SELGLTQDQEAEAQQNKKSSGFLSNLLGGH). Composition is skewed to basic and acidic residues over residues 334–348 (DLDRPSEEVFSRDLS) and 377–388 (KEQLDSGHRPSK). A compositionally biased stretch (acidic residues) spans 443-455 (PEEDTDTEEGDDF). The short motif at 453–458 (DDFELL) is the LIR motif element. The span at 471–490 (GLTQDQEAEAQQNKKSSGFL) shows a compositional bias: polar residues.

This sequence belongs to the RETREG family. In terms of assembly, homooligomer; oligomerization is enhanced following endoplasmic reticulum stress and is mediated by the reticulon homology domain. Interacts with ATG8 family modifier proteins MAP1LC3A, MAP1LC3B, MAP1LC3C, GABARAP, GABARAPL1 and GABARAPL2. Shows higher affinity for GABARAPL1 than for MAP1LC3A or MAP1LC3B. In terms of processing, phosphorylation at Ser-151 by CAMK2B enhances oligomerization and membrane scission and reticulophagy activity. In terms of tissue distribution, overexpressed in esophageal squamous cell carcinoma.

Its subcellular location is the golgi apparatus. The protein localises to the cis-Golgi network membrane. The protein resides in the endoplasmic reticulum membrane. Endoplasmic reticulum (ER)-anchored autophagy regulator which mediates ER delivery into lysosomes through sequestration into autophagosomes. Promotes membrane remodeling and ER scission via its membrane bending capacity and targets the fragments into autophagosomes via interaction with ATG8 family proteins. Active under basal conditions. Required for collagen quality control in a LIR motif-dependent manner. Required for long-term survival of nociceptive and autonomic ganglion neurons. In terms of biological role, (Microbial infection) During SARS-CoV-2 infection, RETREG1-mediated reticulophagy is promoted by SARS-CoV-2 ORF3A protein. This induces endoplasmic reticulum stress and inflammatory responses and facilitates viral infection. The chain is Reticulophagy regulator 1 from Homo sapiens (Human).